The sequence spans 636 residues: MAPRPPTAKPQESVTFKDVAVNFTQEEWHHVGPAQRSLYRDVMLENYNHLVSLGYQVSKPEVIFKLEQGEEPWISEKEIQRPFCPDWKTRPESSRSPQQGVSEVFLRTNVLSHTTIGDIWNVAIQGHQESGRRHLGPEASSQKKITTLEKKIEQNKVGEDSSLSTDLVPQLDISSSIRPSDCKTFGNNLEHNSELVTQSNILAKKKPYKCDKCRKSFIHRSSLNKHEKIHKGDPYSNGTDQGAQSGRKHHECADCGKTFLWRTQLTEHQRIHTGEKPFECNVCGKAFRHSSSLGQHENAHTGEKPYQCSLCGKAFQRSSSLVQHQRIHTGEKPYRCNLCGRSFRHSTSLTQHEVTHSGEKPFQCKECGKAFSRCSSLVQHERTHTGEKPFECSICGRAFGQSPSLYKHMRIHKRSKPYQSNNFSLAFVPNTPLPQGEGLLTEVKSYHCNDCGKDFGHITDFSEHQRLHAGENSYGSEQTLLGQQSLSHPREKPYQCNVCGKAFKRSTSFIEHHRIHTGEKPYECNECGEAFSRLSSLTQHERTHTGEKPYECIDCGKAFSQSSSLIQHERTHTGEKPYECNECGRAFRKKTNLHDHQRTHTGEKPYACKECGRNFSRSSALTKHHRVHARNKLQES.

The 72-residue stretch at 14–85 folds into the KRAB domain; the sequence is VTFKDVAVNF…EKEIQRPFCP (72 aa). 7 C2H2-type zinc fingers span residues 208–230, 250–272, 278–300, 306–328, 334–356, 362–384, and 390–412; these read YKCD…EKIH, HECA…QRIH, FECN…ENAH, YQCS…QRIH, YRCN…EVTH, FQCK…ERTH, and FECS…MRIH. A disordered region spans residues 227-247; that stretch reads EKIHKGDPYSNGTDQGAQSGR. A Glycyl lysine isopeptide (Lys-Gly) (interchain with G-Cter in SUMO2) cross-link involves residue Lys-444. C2H2-type zinc fingers lie at residues 446-468, 494-516, 522-544, 550-572, 578-600, and 606-628; these read YHCN…QRLH, YQCN…HRIH, YECN…ERTH, YECI…ERTH, YECN…QRTH, and YACK…HRVH.

The protein belongs to the krueppel C2H2-type zinc-finger protein family. Interacts (via N- and C-termini) with REST (via zinc-finger DNA-binding domain); the interaction inhibits REST repressor activity. As to expression, brain, spleen, thymus, and testis. Expressed in heart.

The protein resides in the nucleus. Its function is as follows. Inhibits the transcriptional repressor activity of REST by inhibiting its binding to DNA, thereby derepressing transcription of REST target genes. The chain is Zinc finger protein 90 (Zfp90) from Mus musculus (Mouse).